The sequence spans 152 residues: Ribosome maturation factor RimP (152 aa).

Belongs to the RimP family.

It is found in the cytoplasm. Required for maturation of 30S ribosomal subunits. This Proteus mirabilis (strain HI4320) protein is Ribosome maturation factor RimP.